The following is a 295-amino-acid chain: Alpha-soluble NSF attachment protein (295 aa).

Position 1 is an N-acetylmethionine (M1). A phosphoserine mark is found at S26, S29, and S195.

The protein belongs to the SNAP family. In terms of assembly, interacts with PRKCABP, and disrupts the interaction between GRIA2 and PRKCABP, leading to the internalization of GRIA2. Found in a complex with VAMP8. Component of a SNARE-like complex that contains at least ZW10, USE1L, RINT1, STX18 and NAPA/SNAP-alpha. Interacts with VTI1A. Interacts with STX12. Interacts with GNA12 (via N-terminus); the interaction promotes CDH5 localization to plasma membrane.

It is found in the cell membrane. In terms of biological role, required for vesicular transport between the endoplasmic reticulum and the Golgi apparatus. Together with GNA12 promotes CDH5 localization to plasma membrane. The polypeptide is Alpha-soluble NSF attachment protein (NAPA) (Homo sapiens (Human)).